A 103-amino-acid chain; its full sequence is Large ribosomal subunit protein bL21 (103 aa).

This sequence belongs to the bacterial ribosomal protein bL21 family. As to quaternary structure, part of the 50S ribosomal subunit. Contacts protein L20.

In terms of biological role, this protein binds to 23S rRNA in the presence of protein L20. In Histophilus somni (strain 129Pt) (Haemophilus somnus), this protein is Large ribosomal subunit protein bL21.